The following is an 824-amino-acid chain: U-box domain-containing protein 24 (824 aa).

One can recognise a U-box domain in the interval 13 to 92 (GAFEAFVCPL…HEWRARNEEK (80 aa)). ARM repeat units lie at residues 133–172 (AASK…VLVE), 175–214 (DDNK…ELSG), 217–258 (PTCE…NLDR), 260–299 (DANV…ELAL), 300–339 (ANDD…EISS), 341–385 (EASA…NLVA), 396–435 (DDDE…PAIG), 441–481 (VLAG…DIRV), and 486–525 (LLRN…EEQA).

In terms of assembly, interacts with BZR1, BZR2, BZR3 and GSK2. Post-translationally, auto-ubiquitinated. In terms of processing, phosphorylated by GSK2. Phosphorylation of PUB24 increases its cellular stability.

It is found in the cytoplasm. It localises to the cytosol. The protein localises to the nucleus. The enzyme catalyses S-ubiquitinyl-[E2 ubiquitin-conjugating enzyme]-L-cysteine + [acceptor protein]-L-lysine = [E2 ubiquitin-conjugating enzyme]-L-cysteine + N(6)-ubiquitinyl-[acceptor protein]-L-lysine.. It functions in the pathway protein modification; protein ubiquitination. E3 ubiquitin-protein ligase that functions as a negative regulator of brassinosteroid (BR) signaling. Targets BZR1, a positive regulator of BR signaling pathway, and promotes its degradation via the ubiquitin-26S proteasome pathway. In Oryza sativa subsp. japonica (Rice), this protein is U-box domain-containing protein 24.